The following is a 725-amino-acid chain: Another transcription unit protein (725 aa).

Positions 1 to 10 are enriched in acidic residues; it reads MGSQNSDDDS. Disordered stretches follow at residues 1-379, 566-603, and 617-725; these read MGSQ…PETR, RQAM…EGSD, and YKKG…SDND. Residues 11–70 are compositionally biased toward low complexity; that stretch reads GSSGSSRSGSRSVTPQGGSAPGSQRSRRSGSGSDRSRSGSRSSRSRSGSGSPRSARSGSA. Residues 82–101 show a composition bias toward basic residues; the sequence is RSKRSRSAHSRRSGSARSRK. Polar residues predominate over residues 104–116; the sequence is TPESPQSHRSGSL. A compositionally biased stretch (low complexity) spans 117–140; it reads QSRKSGSPQSRRSGSPQSRKSGST. Residues 141–160 show a composition bias toward basic residues; that stretch reads HSRRSGSAHSRRSGSARSRK. Residues Ser175, Ser186, Ser188, and Ser190 each carry the phosphoserine modification. Positions 206–223 are enriched in basic residues; that stretch reads SRSRSRSRSGSRTSRSRS. A compositionally biased stretch (low complexity) spans 224-242; sequence KTGTPSPNRSRSGSASGSG. Ser265, Ser267, and Ser269 each carry phosphoserine. Phosphothreonine is present on Thr286. 3 positions are modified to phosphoserine: Ser288, Ser290, and Ser312. A compositionally biased stretch (acidic residues) spans 306 to 318; it reads GDADDISDDEDEA. Positions 325–353 are enriched in basic residues; that stretch reads SPVRSKSRSQSKSHSHSRSMSHSRSRSRS. Over residues 354 to 369 the composition is skewed to basic and acidic residues; sequence RSRDKVESQVESAPKE. Residue Ser355 is modified to Phosphoserine. Residues 571–582 show a composition bias toward basic residues; that stretch reads NQHKSLPKKKKP. Thr593 bears the Phosphothreonine mark. Phosphoserine is present on residues Ser595, Ser602, and Ser631. A Phosphothreonine modification is found at Thr632. Phosphoserine occurs at positions 635, 636, and 642. Over residues 644-665 the composition is skewed to basic and acidic residues; that stretch reads FEARRSKKVDKAKASKALRDSD. The segment covering 710–725 has biased composition (gly residues); it reads SGSGSGSGSGSGSDND.

This Drosophila melanogaster (Fruit fly) protein is Another transcription unit protein (Atu).